Here is a 109-residue protein sequence, read N- to C-terminus: MSAQPVDIQIFGRSLRVNCPPDQRDALNQAADDLNQRLQDLKVRTRVTNTEQLVFIAALNISYELTQEKAKTRDYAASMEQRIRMLQQTIEQALLDQGRITEKTGQNFE.

Residues 21–97 (PDQRDALNQA…QTIEQALLDQ (77 aa)) are a coiled coil.

It belongs to the ZapA family. Type 1 subfamily. Homodimer. Interacts with FtsZ.

It localises to the cytoplasm. Its function is as follows. Activator of cell division through the inhibition of FtsZ GTPase activity, therefore promoting FtsZ assembly into bundles of protofilaments necessary for the formation of the division Z ring. It is recruited early at mid-cell but it is not essential for cell division. This chain is Cell division protein ZapA, found in Salmonella agona (strain SL483).